We begin with the raw amino-acid sequence, 274 residues long: Ubiquinone biosynthesis O-methyltransferase, mitochondrial (274 aa).

The transit peptide at 1–30 (MNSMNILNKVKNVKSYTRLVRQGFLSQQRN) directs the protein to the mitochondrion. S-adenosyl-L-methionine is bound by residues R65, G88, D109, and M154. Positions 155, 158, and 159 each coordinate Mg(2+).

Belongs to the class I-like SAM-binding methyltransferase superfamily. UbiG/COQ3 family. Component of a multi-subunit COQ enzyme complex, composed of at least coq3, coq4, coq5, coq6, coq7 and coq9. It depends on Mg(2+) as a cofactor.

Its subcellular location is the mitochondrion inner membrane. The enzyme catalyses 3,4-dihydroxy-5-(all-trans-decaprenyl)benzoate + S-adenosyl-L-methionine = 4-hydroxy-3-methoxy-5-(all-trans-decaprenyl)benzoate + S-adenosyl-L-homocysteine + H(+). The catalysed reaction is a 3-demethylubiquinone + S-adenosyl-L-methionine = a ubiquinone + S-adenosyl-L-homocysteine. It carries out the reaction 3-demethylubiquinol-10 + S-adenosyl-L-methionine = ubiquinol-10 + S-adenosyl-L-homocysteine + H(+). It participates in cofactor biosynthesis; ubiquinone biosynthesis. In terms of biological role, O-methyltransferase required for two non-consecutive steps during ubiquinone biosynthesis. Catalyzes the 2 O-methylation of 3,4-dihydroxy-5-(all-trans-decaprenyl)benzoic acid into 4-hydroxy-3-methoxy-5-(all-trans-decaprenyl)benzoic acid. Also catalyzes the last step of ubiquinone biosynthesis by mediating methylation of 3-demethylubiquinone into ubiquinone. Also able to mediate the methylation of 3-demethylubiquinol-10 into ubiquinol-10. The protein is Ubiquinone biosynthesis O-methyltransferase, mitochondrial of Schizosaccharomyces pombe (strain 972 / ATCC 24843) (Fission yeast).